Reading from the N-terminus, the 346-residue chain is NADH-ubiquinone oxidoreductase chain 2 (346 aa).

Transmembrane regions (helical) follow at residues 1–21 (MNPH…TITI), 25–45 (HWVL…PLIS), 60–80 (FLTQ…NAWA), 95–115 (CLLL…HFWF), 124–144 (LMTA…LLLM), 149–169 (LNPA…GWMG), 178–195 (ILAF…IILV), 200–219 (LALL…FMAL), 242–262 (ATLM…GFMP), 274–294 (EMTP…FFYL), and 326–346 (AILA…HAIV).

This sequence belongs to the complex I subunit 2 family.

The protein resides in the mitochondrion inner membrane. The enzyme catalyses a ubiquinone + NADH + 5 H(+)(in) = a ubiquinol + NAD(+) + 4 H(+)(out). Its function is as follows. Core subunit of the mitochondrial membrane respiratory chain NADH dehydrogenase (Complex I) that is believed to belong to the minimal assembly required for catalysis. Complex I functions in the transfer of electrons from NADH to the respiratory chain. The immediate electron acceptor for the enzyme is believed to be ubiquinone. This Mareca americana (American wigeon) protein is NADH-ubiquinone oxidoreductase chain 2 (MT-ND2).